The following is a 437-amino-acid chain: Serine--tRNA ligase (437 aa).

Residue 244–246 participates in L-serine binding; sequence TAE. 275–277 serves as a coordination point for ATP; that stretch reads RSE. E298 contributes to the L-serine binding site. Residue 362 to 365 coordinates ATP; that stretch reads EISS. Residue S397 participates in L-serine binding.

It belongs to the class-II aminoacyl-tRNA synthetase family. Type-1 seryl-tRNA synthetase subfamily. In terms of assembly, homodimer. The tRNA molecule binds across the dimer.

The protein localises to the cytoplasm. It catalyses the reaction tRNA(Ser) + L-serine + ATP = L-seryl-tRNA(Ser) + AMP + diphosphate + H(+). It carries out the reaction tRNA(Sec) + L-serine + ATP = L-seryl-tRNA(Sec) + AMP + diphosphate + H(+). It participates in aminoacyl-tRNA biosynthesis; selenocysteinyl-tRNA(Sec) biosynthesis; L-seryl-tRNA(Sec) from L-serine and tRNA(Sec): step 1/1. Catalyzes the attachment of serine to tRNA(Ser). Is also able to aminoacylate tRNA(Sec) with serine, to form the misacylated tRNA L-seryl-tRNA(Sec), which will be further converted into selenocysteinyl-tRNA(Sec). The polypeptide is Serine--tRNA ligase (Nitrosomonas europaea (strain ATCC 19718 / CIP 103999 / KCTC 2705 / NBRC 14298)).